A 188-amino-acid polypeptide reads, in one-letter code: Surfactant protein C (188 aa).

Residues 1–23 (MDMGSKEALMESPPDYSAAPRGR) constitute a propeptide that is removed on maturation. Residues Cys-28 and Cys-29 are each lipidated (S-palmitoyl cysteine). Residues 59 to 188 (HMSQKHTEMV…LCGEVPLIYI (130 aa)) constitute a propeptide that is removed on maturation. The BRICHOS domain occupies 94 to 188 (FPIGSTGIVT…LCGEVPLIYI (95 aa)). A disulfide bridge links Cys-121 with Cys-180. Positions 144–164 (NPAEPPTQRGQDKGPAAGPAS) are disordered.

The protein localises to the secreted. Its subcellular location is the extracellular space. It localises to the surface film. Pulmonary surfactant associated proteins promote alveolar stability by lowering the surface tension at the air-liquid interface in the peripheral air spaces. This chain is Surfactant protein C (SFTPC), found in Oryctolagus cuniculus (Rabbit).